The following is a 331-amino-acid chain: MQNHNNRIVITPGEPAGVGPDLVIALAQQDWPVELVVCADPALLLTRASQLNLPLQLREYQQDKPALAQLAGTLTILPVKIAAEVIPGQLDVKNSHYVVETLAKACDGAISGEFAALVTGPVQKSIINDAGIPFIGHTEFFADRSHCSRVVMMLATEELRVALATTHLPLLAVPGAITQTSLHEVISILDNDLKTKFGISQPQIYVCGLNPHAGEGGHMGHEEIETIIPALATLRQQGINLIGPLPADTLFQPKYLQHADAVLAMYHDQGLPVLKYQGFGRAVNITLGLPFIRTSVDHGTALELAATGTADVGSFITALNLAIKMINNSNE.

The substrate site is built by His-137 and Thr-138. Positions 167, 212, and 267 each coordinate a divalent metal cation. 3 residues coordinate substrate: Lys-275, Asn-284, and Arg-293.

The protein belongs to the PdxA family. As to quaternary structure, homodimer. Requires Zn(2+) as cofactor. Mg(2+) serves as cofactor. The cofactor is Co(2+).

It localises to the cytoplasm. The enzyme catalyses 4-(phosphooxy)-L-threonine + NAD(+) = 3-amino-2-oxopropyl phosphate + CO2 + NADH. It participates in cofactor biosynthesis; pyridoxine 5'-phosphate biosynthesis; pyridoxine 5'-phosphate from D-erythrose 4-phosphate: step 4/5. In terms of biological role, catalyzes the NAD(P)-dependent oxidation of 4-(phosphooxy)-L-threonine (HTP) into 2-amino-3-oxo-4-(phosphooxy)butyric acid which spontaneously decarboxylates to form 3-amino-2-oxopropyl phosphate (AHAP). This chain is 4-hydroxythreonine-4-phosphate dehydrogenase, found in Yersinia enterocolitica serotype O:8 / biotype 1B (strain NCTC 13174 / 8081).